An 82-amino-acid polypeptide reads, in one-letter code: MASSEQEILAGLAEIVNEETGLPTDSVQLDKSFTDDLDIDSLSMMTIVTQAEDKFSVTIPDDEVKNLVTVGDAVTYIAGAQA.

Positions 3–81 (SSEQEILAGL…DAVTYIAGAQ (79 aa)) constitute a Carrier domain. Ser41 is subject to O-(pantetheine 4'-phosphoryl)serine.

Belongs to the acyl carrier protein (ACP) family. 4'-phosphopantetheine is transferred from CoA to a specific serine of apo-ACP by AcpS. This modification is essential for activity because fatty acids are bound in thioester linkage to the sulfhydryl of the prosthetic group.

The protein localises to the cytoplasm. It functions in the pathway lipid metabolism; fatty acid biosynthesis. Carrier of the growing fatty acid chain in fatty acid biosynthesis. The polypeptide is Acyl carrier protein (Beutenbergia cavernae (strain ATCC BAA-8 / DSM 12333 / CCUG 43141 / JCM 11478 / NBRC 16432 / NCIMB 13614 / HKI 0122)).